A 644-amino-acid chain; its full sequence is Transcription factor cep-1 (644 aa).

A DNA-binding region spans residues 223–418 (EKWMEIDVLK…NFCEREDAKQ (196 aa)). Zn(2+) is bound by residues Cys-307, His-310, Cys-361, and Cys-365. The interval 528 to 555 (TNYSFRTLTLSTAEYTKVVEFLAREAKV) is required for tertiary structure stability of the protein.

This sequence belongs to the p53 family. In terms of assembly, homodimer. Interacts (via C-terminus domain) with prmt-5; not methylated by prmt-5. Interacts with cbp-1 (via HAT domain); cep-1 transcriptional activity may be inhibited by interaction with methylated cbp-1. Component of a complex that contains prmt-5 and cbp-1. Interacts with ape-1; the interaction inhibits pro-apoptotic activity of cep-1. Requires Zn(2+) as cofactor. Phosphorylated in response to IR-induced DNA damage which is thought to be mediated by akt-1. In terms of tissue distribution, expressed in pharyngeal muscle and neurons.

It localises to the nucleus. Its function is as follows. Transcriptional activator that binds the same DNA consensus sequence as p53. Has a role in normal development to ensure proper meiotic chromosome segregation. Promotes apoptosis under conditions of cellular and genotoxic stress in response to DNA damage, hypoxia, or starvation. Regulates germline apoptosis in response to DNA damage. Its pro-apoptotic activity is inhibited when bound to ape-1 in vitro. Plays a role in cell cycle arrest in the germline in response to DNA damage by UV-C light. However, not required for survival in response to DNA damage induced by UV-C light, indicating that it is unlikely to be involved in DNA repair. Required for induction of ced-13 in response to DNA damage. Regulates DNA damage-induced apoptosis by inducing transcription of the programmed cell death activator egl-1. Regulates germline proliferation by activating phg-1. Modulates lifespan. This Caenorhabditis elegans protein is Transcription factor cep-1.